The chain runs to 412 residues: Exodeoxyribonuclease 7 large subunit (412 aa).

The protein belongs to the XseA family. In terms of assembly, heterooligomer composed of large and small subunits.

It localises to the cytoplasm. The enzyme catalyses Exonucleolytic cleavage in either 5'- to 3'- or 3'- to 5'-direction to yield nucleoside 5'-phosphates.. Bidirectionally degrades single-stranded DNA into large acid-insoluble oligonucleotides, which are then degraded further into small acid-soluble oligonucleotides. The protein is Exodeoxyribonuclease 7 large subunit of Nostoc sp. (strain PCC 7120 / SAG 25.82 / UTEX 2576).